Reading from the N-terminus, the 798-residue chain is ATP-dependent RNA helicase bel (798 aa).

The disordered stretch occupies residues 16–248; sequence VAGLDLNGGS…SRWKEGGGSN (233 aa). The span at 31–42 shows a compositional bias: polar residues; sequence PITSKTSTNSVT. 3 stretches are compositionally biased toward gly residues: residues 94 to 110, 118 to 132, and 154 to 178; these read RGGGGEYRRGGGGGGRG, YGYGSGGGGRRGGGG, and SGGGGGGGRGFGRGPSYRGGGGGSG. Phosphoserine is present on residues serine 177 and serine 179. Positions 198–209 are enriched in basic and acidic residues; that stretch reads RNDRWQEPERPA. 2 positions are modified to phosphoserine: serine 214 and serine 219. Residues 295 to 323 carry the Q motif motif; that stretch reads TSFDDVQLTEIIRNNVALARYDKPTPVQK. ATP is bound by residues 315 to 322 and 339 to 346; these read YDKPTPVQ and AQTGSGKT. The region spanning 326–515 is the Helicase ATP-binding domain; the sequence is IPIIINGRDL…SDFLSNYIFL (190 aa). Residues 459 to 462 carry the DEAD box motif; that stretch reads DEAD. The region spanning 542–693 is the Helicase C-terminal domain; it reads YLLDLLSSIR…EIPSFMEDMS (152 aa). Phosphoserine is present on serine 638. Disordered regions lie at residues 689–765 and 778–798; these read MEDM…SGGG and GGSYGGGSASHSSNAPDWWAQ. Gly residues-rich tracts occupy residues 706-717 and 740-750; these read RGGGGRYGGGFG and GGSGSGGGGGS.

The protein belongs to the DEAD box helicase family. DDX3/DED1 subfamily. As to expression, vas and bel colocalize in nuage (perinuclear, electron-dense granules in germline cells) and at the oocyte posterior during oogenesis.

The protein localises to the cytoplasm. The enzyme catalyses ATP + H2O = ADP + phosphate + H(+). ATP-dependent RNA helicase that is essential and required for cellular function, larval growth, and for male and female fertility. Also required for RNA interference (RNAi), double-stranded RNA induces potent and specific gene silencing, by acting downstream of dsRNA internalization. RNAi is mediated by the RNA-induced silencing complex (RISC), a sequence-specific, multicomponent nuclease that destroys or silences messenger RNAs homologous to the silencing trigger. This chain is ATP-dependent RNA helicase bel, found in Drosophila melanogaster (Fruit fly).